Reading from the N-terminus, the 143-residue chain is Putative glycerol transporter Lin0368 (143 aa).

4 helical membrane passes run 6–26, 27–47, 60–80, and 90–110; these read GMIG…PLAE, NYGI…MWFM, AAFV…DVFM, and LPTI…AAAI. The interval 118–143 is disordered; sequence HEAKQEKTEPGMNIKEEERLNENQLV.

Its subcellular location is the membrane. In terms of biological role, could be involved in the glycerol uptake either via facilitated diffusion or active transport. The protein is Putative glycerol transporter Lin0368 of Listeria innocua serovar 6a (strain ATCC BAA-680 / CLIP 11262).